Consider the following 420-residue polypeptide: Putative polyketide beta-ketoacyl synthase 1 (420 aa).

Residues 3–414 (QRRVAITGIE…GFQSAMVLTS (412 aa)) enclose the Ketosynthase family 3 (KS3) domain. Catalysis depends on for beta-ketoacyl synthase activity residues cysteine 169, histidine 307, and histidine 344.

Belongs to the thiolase-like superfamily. Beta-ketoacyl-ACP synthases family.

The protein operates within antifungal biosynthesis; monensin biosynthesis. In Streptomyces virginiae (Streptomyces cinnamonensis), this protein is Putative polyketide beta-ketoacyl synthase 1.